The primary structure comprises 534 residues: Origin of replication complex subunit 5 (534 aa).

The interval 1 to 36 (MPPKEESSKVTRRSTRSSASVTVENSEPIESHTPTI) is disordered. 83–90 (GGASTGKT) serves as a coordination point for ATP. The Nuclear localization signal signature appears at 129 to 136 (HRKCSLNG). A disordered region spans residues 397 to 428 (MFDSTGGMDNRKRKRKASEKSMEKKEIAEQEA). Positions 414-424 (SEKSMEKKEIA) are enriched in basic and acidic residues.

It belongs to the ORC5 family. In terms of assembly, component of the origin recognition complex (ORC) composed of at least ORC1 (ORC1A or ORC1B), ORC2, ORC3, ORC4, ORC5 and ORC6. ORC is regulated in a cell-cycle and development dependent manner. It is sequentially assembled at the exit from anaphase of mitosis and disassembled as cells enter S phase. Interacts directly with ORC1A, ORC1B, ORC2, ORC3, ORC4 and ORC6. As to expression, follow a cell-cycle regulation with a peak at the G1/S-phase. Mostly expressed in flower buds and cauline leaves, and, to a lower exent, in roots, leaves and stems. Expressed at low levels ubiquitously.

It localises to the nucleus. Component of the origin recognition complex (ORC) that binds origins of replication. DNA-binding is ATP-dependent. The specific DNA sequences that define origins of replication have not been identified yet. ORC is required to assemble the pre-replication complex necessary to initiate DNA replication. The chain is Origin of replication complex subunit 5 from Arabidopsis thaliana (Mouse-ear cress).